Here is a 529-residue protein sequence, read N- to C-terminus: Bifunctional purine biosynthesis protein PurH (529 aa).

The MGS-like domain occupies 1-148 (MQQRRPVRRA…KNHKDVAIVV (148 aa)).

This sequence belongs to the PurH family.

The enzyme catalyses (6R)-10-formyltetrahydrofolate + 5-amino-1-(5-phospho-beta-D-ribosyl)imidazole-4-carboxamide = 5-formamido-1-(5-phospho-D-ribosyl)imidazole-4-carboxamide + (6S)-5,6,7,8-tetrahydrofolate. The catalysed reaction is IMP + H2O = 5-formamido-1-(5-phospho-D-ribosyl)imidazole-4-carboxamide. Its pathway is purine metabolism; IMP biosynthesis via de novo pathway; 5-formamido-1-(5-phospho-D-ribosyl)imidazole-4-carboxamide from 5-amino-1-(5-phospho-D-ribosyl)imidazole-4-carboxamide (10-formyl THF route): step 1/1. It participates in purine metabolism; IMP biosynthesis via de novo pathway; IMP from 5-formamido-1-(5-phospho-D-ribosyl)imidazole-4-carboxamide: step 1/1. This chain is Bifunctional purine biosynthesis protein PurH, found in Klebsiella pneumoniae (strain 342).